Consider the following 141-residue polypeptide: MAVERTFSIIKPNAVAKNNIGAIYARFESAGFKIIAAKMLHLTKEQAEGFYAEHKGRPFFDGLVEFMTSGPVMIQVLEGENAVQRHRDIMGATNPDNALAGTLRADFADSFTENAVHGSDAVESAQREIAYFFSENEICPR.

The ATP site is built by lysine 11, phenylalanine 59, arginine 87, threonine 93, arginine 104, and asparagine 114. Residue histidine 117 is the Pros-phosphohistidine intermediate of the active site.

This sequence belongs to the NDK family. In terms of assembly, homotetramer. It depends on Mg(2+) as a cofactor.

It localises to the cytoplasm. It catalyses the reaction a 2'-deoxyribonucleoside 5'-diphosphate + ATP = a 2'-deoxyribonucleoside 5'-triphosphate + ADP. The catalysed reaction is a ribonucleoside 5'-diphosphate + ATP = a ribonucleoside 5'-triphosphate + ADP. Functionally, major role in the synthesis of nucleoside triphosphates other than ATP. The ATP gamma phosphate is transferred to the NDP beta phosphate via a ping-pong mechanism, using a phosphorylated active-site intermediate. The protein is Nucleoside diphosphate kinase of Yersinia enterocolitica serotype O:8 / biotype 1B (strain NCTC 13174 / 8081).